An 89-amino-acid chain; its full sequence is Small ribosomal subunit protein uS15 (89 aa).

The protein belongs to the universal ribosomal protein uS15 family. In terms of assembly, part of the 30S ribosomal subunit. Forms a bridge to the 50S subunit in the 70S ribosome, contacting the 23S rRNA.

Its function is as follows. One of the primary rRNA binding proteins, it binds directly to 16S rRNA where it helps nucleate assembly of the platform of the 30S subunit by binding and bridging several RNA helices of the 16S rRNA. Forms an intersubunit bridge (bridge B4) with the 23S rRNA of the 50S subunit in the ribosome. In Pelotomaculum thermopropionicum (strain DSM 13744 / JCM 10971 / SI), this protein is Small ribosomal subunit protein uS15.